Reading from the N-terminus, the 59-residue chain is Ferredoxin (59 aa).

The 28-residue stretch at 2–29 (KVSVDKDACIGCGVCASICPDVFEMDDD) folds into the 4Fe-4S ferredoxin-type domain. Positions 10, 13, and 16 each coordinate [4Fe-4S] cluster. Cysteines 20 and 43 form a disulfide. [4Fe-4S] cluster is bound at residue Cys-51.

Requires [4Fe-4S] cluster as cofactor. It depends on [3Fe-4S] cluster as a cofactor.

Functionally, ferredoxins are iron-sulfur proteins that transfer electrons in a wide variety of metabolic reactions. The polypeptide is Ferredoxin (Thermococcus litoralis).